A 492-amino-acid polypeptide reads, in one-letter code: Probable cytochrome P450 310a1 (492 aa).

Cys428 contacts heme.

It belongs to the cytochrome P450 family. Requires heme as cofactor.

The protein resides in the endoplasmic reticulum membrane. It is found in the microsome membrane. In terms of biological role, may be involved in the metabolism of insect hormones and in the breakdown of synthetic insecticides. The sequence is that of Probable cytochrome P450 310a1 (Cyp310a1) from Drosophila melanogaster (Fruit fly).